We begin with the raw amino-acid sequence, 1368 residues long: Inactive tyrosine-protein kinase PRAG1 (1368 aa).

The tract at residues 200–236 (CLKGPRPCTSPQPLRESLPSEDDSDQRCSPSGDSEGG) is disordered. Y238 bears the Phosphotyrosine; by CSK mark. The interval 297-330 (STANPPHLGPKKPSLNSEAASSSDGLSCGSSRSG) is disordered. The segment covering 317–330 (SSSDGLSCGSSRSG) has biased composition (low complexity). Residues Y343 and Y391 each carry the phosphotyrosine; by CSK modification. Disordered regions lie at residues 392 to 443 (AESA…PNAA), 499 to 605 (LSSR…GAWS), and 636 to 792 (HSNS…KKIV). Residues 414–434 (VSSGQVWTGDTWSQKTPSGWS) are compositionally biased toward polar residues. Over residues 502 to 518 (RESHPHNMTENSSKEKP) the composition is skewed to basic and acidic residues. 2 stretches are compositionally biased toward low complexity: residues 522–535 (PKLS…SPVS) and 550–563 (SGSS…SRVP). 2 stretches are compositionally biased toward polar residues: residues 564–574 (TNLTSSCQTNG) and 652–666 (SGQN…SKSA). Phosphoserine occurs at positions 667 and 716. Composition is skewed to polar residues over residues 707-717 (VSQSSAESLSP) and 725-741 (SFTT…SRTC). Phosphoserine occurs at positions 753 and 797. Disordered stretches follow at residues 799–818 (PDGF…SPKL) and 873–901 (NSKG…VSSQ). A compositionally biased stretch (low complexity) spans 887 to 901 (AATSTSSSQLSVSSQ). The tract at residues 906–949 (SSQLQLHSLLSSISSKEGTYAKLGGLYTQSLARLVTKCEDLFMG) is required for homodimerization. Residues 940 to 1291 (VTKCEDLFMG…EAKRVLQCLL (352 aa)) form the Protein kinase domain. Residues 1134–1144 (SSPGPSANPSV) show a composition bias toward polar residues. The segment at 1134–1166 (SSPGPSANPSVPTTTSRCPSAAPAATTACQGGP) is disordered. Residues 1145 to 1162 (PTTTSRCPSAAPAATTAC) are compositionally biased toward low complexity. The interval 1293 to 1368 (GPRRELVEQP…LQSLKLLQLL (76 aa)) is required for homodimerization.

This sequence belongs to the protein kinase superfamily. Homodimer. Dimerization leads to the catalytic activation of CSK. Interacts (via C-terminus) with RND2. Interacts with CSK (via SH2 domain) in a Tyr-391 phosphorylation-dependent manner; this interaction potentiates kinase activity of CSK. Interacts with NOTCH1 intracellular domain (N1ICD). Forms a complex with N1ICD and MAML1, in a MAML1-dependent manner. In terms of processing, phosphorylated by CSK on Tyr-238, Tyr-343, and Tyr-391; Tyr-391 is a primary site of phosphorylation. In terms of tissue distribution, highly-expressed in brain, including cortical and hippocampal pyramidal neurons, as well as in kidney, spleen, colon and small intestine.

It localises to the cytoplasm. The protein resides in the nucleus. It is found in the cell junction. The protein localises to the focal adhesion. Its function is as follows. Catalytically inactive protein kinase that acts as a scaffold protein. Functions as an effector of the small GTPase RND2, which stimulates RhoA activity and inhibits NGF-induced neurite outgrowth. Promotes Src family kinase (SFK) signallig by regulating the subcellular localization of CSK, a negative regulator of these kinases, leading to the regulation of cell morphology and motility by a CSK-dependent mechanism. Acts as a critical coactivator of Notch signaling. The sequence is that of Inactive tyrosine-protein kinase PRAG1 from Rattus norvegicus (Rat).